The sequence spans 186 residues: Chromophore lyase CpcS/CpeS 1 (186 aa).

It belongs to the CpcS/CpeS biliprotein lyase family.

In terms of biological role, covalently attaches a chromophore to Cys residue(s) of phycobiliproteins. The sequence is that of Chromophore lyase CpcS/CpeS 1 from Synechocystis sp. (strain ATCC 27184 / PCC 6803 / Kazusa).